The primary structure comprises 350 residues: tRNA dimethylallyltransferase (350 aa).

A disordered region spans residues 1 to 20 (MMNTERPAGPLRPPHPPHPP). Residues 10–20 (PLRPPHPPHPP) are compositionally biased toward pro residues. Residue 27–34 (GPTASGKT) participates in ATP binding. Substrate is bound at residue 29-34 (TASGKT). Interaction with substrate tRNA regions lie at residues 52 to 55 (DSAL), 176 to 180 (QRIAR), and 273 to 278 (RCVGYR).

The protein belongs to the IPP transferase family. As to quaternary structure, monomer. Requires Mg(2+) as cofactor.

The enzyme catalyses adenosine(37) in tRNA + dimethylallyl diphosphate = N(6)-dimethylallyladenosine(37) in tRNA + diphosphate. Its function is as follows. Catalyzes the transfer of a dimethylallyl group onto the adenine at position 37 in tRNAs that read codons beginning with uridine, leading to the formation of N6-(dimethylallyl)adenosine (i(6)A). The protein is tRNA dimethylallyltransferase of Albidiferax ferrireducens (strain ATCC BAA-621 / DSM 15236 / T118) (Rhodoferax ferrireducens).